The primary structure comprises 337 residues: Large ribosomal subunit protein uL3 (337 aa).

The tract at residues 1-26 (MTRHHQPRKGSVAFSPRKRVARETPR) is disordered.

This sequence belongs to the universal ribosomal protein uL3 family. In terms of assembly, part of the 50S ribosomal subunit. Forms a cluster with proteins L14 and L24e.

In terms of biological role, one of the primary rRNA binding proteins, it binds directly near the 3'-end of the 23S rRNA, where it nucleates assembly of the 50S subunit. The polypeptide is Large ribosomal subunit protein uL3 (Methanosphaera stadtmanae (strain ATCC 43021 / DSM 3091 / JCM 11832 / MCB-3)).